The primary structure comprises 313 residues: MNATYRHITVLLEEAVSALAPREDGCYLDGTFGRGGHSRALLEKLGAGGRLLGFDKDPQAIQTGKALAAEDGRFVIVQRSFAELGDEVRARGLEGRVDGVLLDLGVSSPQLDDPERGFSFLNDGPLDMRMNPGQGISAAEFIANATEEEIARVFKEYGEERFAKRMARAIVQRRQERPFERTADLAEVITVANPAWEKGKNPATRAFQGLRIHVNNELGDLERGLDAALESLAVGGRLVVISFHSLEDRIVKLFMRKHAKGEADNLPRDLPIRSKVFEPRLKLLGKPQYASEEELKANPRSRSAVMRVAEKLR.

Residues 35-37, aspartate 55, phenylalanine 81, aspartate 103, and glutamine 110 contribute to the S-adenosyl-L-methionine site; that span reads GGH.

Belongs to the methyltransferase superfamily. RsmH family.

It is found in the cytoplasm. It carries out the reaction cytidine(1402) in 16S rRNA + S-adenosyl-L-methionine = N(4)-methylcytidine(1402) in 16S rRNA + S-adenosyl-L-homocysteine + H(+). Specifically methylates the N4 position of cytidine in position 1402 (C1402) of 16S rRNA. This is Ribosomal RNA small subunit methyltransferase H from Pseudomonas aeruginosa (strain ATCC 15692 / DSM 22644 / CIP 104116 / JCM 14847 / LMG 12228 / 1C / PRS 101 / PAO1).